A 345-amino-acid chain; its full sequence is Tetraacyldisaccharide 4'-kinase (345 aa).

51 to 58 contacts ATP; sequence HVGGAGKT.

The protein belongs to the LpxK family.

It carries out the reaction a lipid A disaccharide + ATP = a lipid IVA + ADP + H(+). It functions in the pathway glycolipid biosynthesis; lipid IV(A) biosynthesis; lipid IV(A) from (3R)-3-hydroxytetradecanoyl-[acyl-carrier-protein] and UDP-N-acetyl-alpha-D-glucosamine: step 6/6. Transfers the gamma-phosphate of ATP to the 4'-position of a tetraacyldisaccharide 1-phosphate intermediate (termed DS-1-P) to form tetraacyldisaccharide 1,4'-bis-phosphate (lipid IVA). In Bradyrhizobium sp. (strain BTAi1 / ATCC BAA-1182), this protein is Tetraacyldisaccharide 4'-kinase.